The primary structure comprises 255 residues: 1-(5-phosphoribosyl)-5-[(5-phosphoribosylamino)methylideneamino] imidazole-4-carboxamide isomerase (255 aa).

Asp8 (proton acceptor) is an active-site residue. Asp129 acts as the Proton donor in catalysis.

It belongs to the HisA/HisF family.

The protein resides in the cytoplasm. The catalysed reaction is 1-(5-phospho-beta-D-ribosyl)-5-[(5-phospho-beta-D-ribosylamino)methylideneamino]imidazole-4-carboxamide = 5-[(5-phospho-1-deoxy-D-ribulos-1-ylimino)methylamino]-1-(5-phospho-beta-D-ribosyl)imidazole-4-carboxamide. It functions in the pathway amino-acid biosynthesis; L-histidine biosynthesis; L-histidine from 5-phospho-alpha-D-ribose 1-diphosphate: step 4/9. The chain is 1-(5-phosphoribosyl)-5-[(5-phosphoribosylamino)methylideneamino] imidazole-4-carboxamide isomerase from Prochlorococcus marinus (strain AS9601).